Here is a 92-residue protein sequence, read N- to C-terminus: PqqA binding protein (92 aa).

This sequence belongs to the PqqD family. In terms of assembly, monomer. Interacts with PqqE.

Its pathway is cofactor biosynthesis; pyrroloquinoline quinone biosynthesis. Functionally, functions as a PqqA binding protein and presents PqqA to PqqE, in the pyrroloquinoline quinone (PQQ) biosynthetic pathway. The chain is PqqA binding protein from Azotobacter vinelandii (strain DJ / ATCC BAA-1303).